The chain runs to 326 residues: Tetraacyldisaccharide 4'-kinase (326 aa).

An ATP-binding site is contributed by 55 to 62 (TVGGNGKT).

Belongs to the LpxK family.

It carries out the reaction a lipid A disaccharide + ATP = a lipid IVA + ADP + H(+). Its pathway is glycolipid biosynthesis; lipid IV(A) biosynthesis; lipid IV(A) from (3R)-3-hydroxytetradecanoyl-[acyl-carrier-protein] and UDP-N-acetyl-alpha-D-glucosamine: step 6/6. Functionally, transfers the gamma-phosphate of ATP to the 4'-position of a tetraacyldisaccharide 1-phosphate intermediate (termed DS-1-P) to form tetraacyldisaccharide 1,4'-bis-phosphate (lipid IVA). In Tolumonas auensis (strain DSM 9187 / NBRC 110442 / TA 4), this protein is Tetraacyldisaccharide 4'-kinase.